The following is a 121-amino-acid chain: Putative iron-sulfur cluster insertion protein ErpA 1 (121 aa).

3 residues coordinate iron-sulfur cluster: cysteine 49, cysteine 113, and cysteine 115.

Belongs to the HesB/IscA family. As to quaternary structure, homodimer. It depends on iron-sulfur cluster as a cofactor.

Its function is as follows. Required for insertion of 4Fe-4S clusters. The sequence is that of Putative iron-sulfur cluster insertion protein ErpA 1 from Polaromonas naphthalenivorans (strain CJ2).